Consider the following 145-residue polypeptide: Deoxyuridine 5'-triphosphate nucleotidohydrolase (145 aa).

Residues 63-65 (RSG), Gln76, and 80-82 (TVD) each bind substrate.

This sequence belongs to the dUTPase family. Mg(2+) serves as cofactor.

It catalyses the reaction dUTP + H2O = dUMP + diphosphate + H(+). It functions in the pathway pyrimidine metabolism; dUMP biosynthesis; dUMP from dCTP (dUTP route): step 2/2. This enzyme is involved in nucleotide metabolism: it produces dUMP, the immediate precursor of thymidine nucleotides and it decreases the intracellular concentration of dUTP so that uracil cannot be incorporated into DNA. This chain is Deoxyuridine 5'-triphosphate nucleotidohydrolase, found in Chlamydia trachomatis serovar L2 (strain ATCC VR-902B / DSM 19102 / 434/Bu).